The following is a 95-amino-acid chain: MADEKPKEGVKTENNDHINLKVAGQDGSVAQFKIRRHTPLSKLMKAYCERQGLSIRQIRFRVDGQPINETHTPAQLELEDEDTIDVLQQQTGGVY.

In terms of domain architecture, Ubiquitin-like spans 17 to 95 (HINLKVAGQD…VLQQQTGGVY (79 aa)). Glycine 93 is covalently cross-linked (Glycyl lysine isopeptide (Gly-Lys) (interchain with K-? in acceptor proteins)). A propeptide spanning residues 94–95 (VY) is cleaved from the precursor.

Belongs to the ubiquitin family. SUMO subfamily. Interacts with SAE2. Covalently attached to a number of proteins.

In terms of biological role, ubiquitin-like protein which can be covalently attached to target lysines as a monomer. Does not seem to be involved in protein degradation and may modulate protein subcellular localization, stability or activity. Upon oxidative stress, conjugates to various anti-oxidant enzymes, chaperones, and stress defense proteins. May also conjugate to NFKBIA, TFAP2A and FOS, negatively regulating their transcriptional activity, and to NR3C1, positively regulating its transcriptional activity. Covalent attachment to its substrates requires prior activation by the E1 complex SAE1-SAE2 and linkage to the E2 enzyme UBE2I. The protein is Small ubiquitin-related modifier 4 (SUMO4) of Sus scrofa (Pig).